Consider the following 544-residue polypeptide: Prolyl 4-hydroxylase subunit alpha-3 (544 aa).

The first 19 residues, M1–G19, serve as a signal peptide directing secretion. The stretch at L107–E131 forms a coiled coil. Residues E227–N260 form a TPR repeat. An N-linked (GlcNAc...) asparagine glycan is attached at N248. The Fe2OG dioxygenase domain maps to Y422–E529. 2 residues coordinate Fe cation: H440 and D442. An N-linked (GlcNAc...) asparagine glycan is attached at N482. Residue H510 coordinates Fe cation. K520 serves as a coordination point for 2-oxoglutarate.

Belongs to the P4HA family. As to quaternary structure, heterotetramer of two alpha-3 chains and two beta chains (the beta chain is the multi-functional PDI). The cofactor is Fe(2+). L-ascorbate is required as a cofactor. N-glycosylation plays no role in the catalytic activity.

The protein localises to the endoplasmic reticulum lumen. The catalysed reaction is L-prolyl-[collagen] + 2-oxoglutarate + O2 = trans-4-hydroxy-L-prolyl-[collagen] + succinate + CO2. Functionally, catalyzes the post-translational formation of 4-hydroxyproline in -Xaa-Pro-Gly- sequences in collagens and other proteins. This chain is Prolyl 4-hydroxylase subunit alpha-3 (P4HA3), found in Bos taurus (Bovine).